The following is a 457-amino-acid chain: PE-PGRS family protein PE_PGRS18 (457 aa).

Residues M1 to A92 form the PE domain. NHL repeat units lie at residues F291–V321, N333–N363, G379–A404, and P419–E447.

Belongs to the mycobacterial PE family. PGRS subfamily.

The protein localises to the secreted. It is found in the cell wall. Enhances mycobacterial intracellular survival, probably via altering host macrophage cytokine profiling and attenuating the cell apoptosis. Could be required for host endothelial-cell invasion. In terms of biological role, expression in Mycobacterium smegmatis, a nonpathogenic species naturally deficient in PE_PGRS genes, results in alteration of the production of host cytokines, including IL-6, IL-1beta, IL-10 and IL-12p40, as well as enhanced survival within macrophages largely via attenuating the apoptosis of macrophages. This chain is PE-PGRS family protein PE_PGRS18, found in Mycobacterium tuberculosis (strain ATCC 25618 / H37Rv).